The sequence spans 163 residues: Nuclear cap-binding protein subunit 2 (163 aa).

Residues Tyr-18, Tyr-41, 110-114 (RVDWD), 121-125 (RQYGR), and 131-132 (QV) each bind mRNA. The RRM domain maps to 38–116 (STLYVGNLSF…RIVRVDWDAG (79 aa)).

It belongs to the RRM NCBP2 family. In terms of assembly, component of the nuclear cap-binding complex (CBC), a heterodimer composed of Cbp80 and Cbp20 that interacts with m7GpppG-capped RNA.

It localises to the nucleus. Component of the cap-binding complex (CBC), which binds co-transcriptionally to the 5' cap of pre-mRNAs and is involved in various processes such as pre-mRNA splicing and RNA-mediated gene silencing (RNAi). The CBC complex is involved in miRNA-mediated RNA interference and is required for primary microRNAs (miRNAs) processing. Also involved in innate immunity via the short interfering RNAs (siRNAs) processing machinery by restricting the viral RNA production. In the CBC complex, Cbp20 recognizes and binds capped RNAs (m7GpppG-capped RNA) but requires Cbp80 to stabilize the movement of its N-terminal loop and lock the CBC into a high affinity cap-binding state with the cap structure. The chain is Nuclear cap-binding protein subunit 2 (Cbp20) from Anopheles gambiae (African malaria mosquito).